We begin with the raw amino-acid sequence, 497 residues long: Glycerol kinase (497 aa).

Threonine 11 contributes to the ADP binding site. ATP-binding residues include threonine 11, serine 12, and serine 13. Threonine 11 contacts sn-glycerol 3-phosphate. Arginine 15 lines the ADP pocket. Sn-glycerol 3-phosphate-binding residues include arginine 81, glutamate 82, tyrosine 133, and aspartate 242. 5 residues coordinate glycerol: arginine 81, glutamate 82, tyrosine 133, aspartate 242, and glutamine 243. The ADP site is built by threonine 264 and glycine 307. Residues threonine 264, glycine 307, glutamine 311, and glycine 412 each coordinate ATP. ADP-binding residues include glycine 412 and asparagine 416.

It belongs to the FGGY kinase family.

It carries out the reaction glycerol + ATP = sn-glycerol 3-phosphate + ADP + H(+). It participates in polyol metabolism; glycerol degradation via glycerol kinase pathway; sn-glycerol 3-phosphate from glycerol: step 1/1. Inhibited by fructose 1,6-bisphosphate (FBP). Its function is as follows. Key enzyme in the regulation of glycerol uptake and metabolism. Catalyzes the phosphorylation of glycerol to yield sn-glycerol 3-phosphate. The protein is Glycerol kinase of Polaromonas sp. (strain JS666 / ATCC BAA-500).